Consider the following 141-residue polypeptide: Hemoglobin subunit alpha (141 aa).

The 141-residue stretch at 1 to 141 (VLSPADKNNV…VSTVLTSKYR (141 aa)) folds into the Globin domain. A Phosphoserine modification is found at Ser-3. 2 positions are modified to N6-succinyllysine: Lys-7 and Lys-11. Lys-16 carries the post-translational modification N6-acetyllysine; alternate. Lys-16 carries the post-translational modification N6-succinyllysine; alternate. Position 24 is a phosphotyrosine (Tyr-24). Position 35 is a phosphoserine (Ser-35). Lys-40 is modified (N6-succinyllysine). Ser-49 is subject to Phosphoserine. His-58 contributes to the O2 binding site. Residue His-87 coordinates heme b. Ser-102 is modified (phosphoserine). At Thr-108 the chain carries Phosphothreonine. Phosphoserine occurs at positions 124 and 131. Phosphothreonine is present on residues Thr-134 and Thr-137. Ser-138 is subject to Phosphoserine.

The protein belongs to the globin family. As to quaternary structure, heterotetramer of two alpha chains and two beta chains. In terms of tissue distribution, red blood cells.

In terms of biological role, involved in oxygen transport from the lung to the various peripheral tissues. Hemopressin acts as an antagonist peptide of the cannabinoid receptor CNR1. Hemopressin-binding efficiently blocks cannabinoid receptor CNR1 and subsequent signaling. The protein is Hemoglobin subunit alpha (HBA) of Urocitellus townsendii (Townsend's ground squirrel).